We begin with the raw amino-acid sequence, 839 residues long: Katanin p80 WD40 repeat-containing subunit B1 homolog KTN80.3 (839 aa).

7 WD repeats span residues alanine 14–serine 54, glycine 57–threonine 96, glycine 99–threonine 138, glycine 141–lysine 182, histidine 184–serine 222, threonine 225–aspartate 265, and glycine 267–methionine 304. The DWD box signature appears at phenylalanine 115–arginine 131. 4 disordered regions span residues proline 303–leucine 340, glycine 357–serine 435, leucine 501–lysine 561, and serine 575–methionine 648. 6 stretches are compositionally biased toward polar residues: residues glycine 307–lysine 334, threonine 375–aspartate 385, threonine 411–serine 435, leucine 501–proline 533, aspartate 589–threonine 602, and valine 630–methionine 648.

The protein belongs to the WD repeat KATNB1 family. In terms of assembly, component of KTN80-KTN1 complexes composed of a hexamer of KTN1-KTN80 heterodimers that sense microtubule (MT) geometry to confer precise MT severing. Interacts directly with AAA1/KTN1 and KTN80.1, and weakly with KTN80.4. As to expression, expressed in siliques, flowers, leaves, stems and roots.

The protein resides in the cytoplasm. It is found in the cytoskeleton. Functionally, may participate in a complex which severs microtubules in an ATP-dependent manner. Microtubule severing may promote rapid reorganization of cellular microtubule arrays. Confers precision to microtubule (MT) severing by specific targeting of KTN1 to MT cleavage sites such as crossover or branching nucleation sites. Together with other KTN80s, regulates cell elongation by modulating MT organization. This is Katanin p80 WD40 repeat-containing subunit B1 homolog KTN80.3 from Arabidopsis thaliana (Mouse-ear cress).